Consider the following 208-residue polypeptide: Glutathione S-transferase (208 aa).

One can recognise a GST N-terminal domain in the interval 1-78 (MSYKLTYFPI…HLARKFNLNG (78 aa)). Residues Y7, K42, 49–50 (QL), and 62–63 (QS) each bind glutathione. In terms of domain architecture, GST C-terminal spans 80–200 (NNAETSYVDM…YCAKRNASKM (121 aa)).

Belongs to the GST superfamily. Pi family. In terms of assembly, homodimer.

It catalyses the reaction RX + glutathione = an S-substituted glutathione + a halide anion + H(+). In terms of biological role, conjugation of reduced glutathione to a wide number of exogenous and endogenous hydrophobic electrophiles. The protein is Glutathione S-transferase of Dirofilaria immitis (Canine heartworm).